A 180-amino-acid polypeptide reads, in one-letter code: uncharacterized protein (180 aa).

The next 2 membrane-spanning stretches (helical) occupy residues 37 to 59 and 128 to 147; these read VLHAAAAVTEYAFVLSTLVFPSF and AGSATLFAGAAGAALRVLFV.

Its subcellular location is the cell membrane. This is an uncharacterized protein from Treponema pallidum (strain Nichols).